Consider the following 326-residue polypeptide: Biotin synthase (326 aa).

One can recognise a Radical SAM core domain in the interval 42-266 (NEIQLAALLN…LMPKSYVRLA (225 aa)). Residues cysteine 57, cysteine 61, and cysteine 64 each contribute to the [4Fe-4S] cluster site. [2Fe-2S] cluster is bound by residues cysteine 101, cysteine 132, cysteine 192, and arginine 264.

It belongs to the radical SAM superfamily. Biotin synthase family. Homodimer. Requires [4Fe-4S] cluster as cofactor. The cofactor is [2Fe-2S] cluster.

It carries out the reaction (4R,5S)-dethiobiotin + (sulfur carrier)-SH + 2 reduced [2Fe-2S]-[ferredoxin] + 2 S-adenosyl-L-methionine = (sulfur carrier)-H + biotin + 2 5'-deoxyadenosine + 2 L-methionine + 2 oxidized [2Fe-2S]-[ferredoxin]. It functions in the pathway cofactor biosynthesis; biotin biosynthesis; biotin from 7,8-diaminononanoate: step 2/2. Catalyzes the conversion of dethiobiotin (DTB) to biotin by the insertion of a sulfur atom into dethiobiotin via a radical-based mechanism. The sequence is that of Biotin synthase from Ehrlichia chaffeensis (strain ATCC CRL-10679 / Arkansas).